The chain runs to 151 residues: Neuroglobin (151 aa).

The region spanning 1 to 149 (MERPEQELIR…VVQAMSRGWD (149 aa)) is the Globin domain. Heme b is bound by residues His64 and His96.

It belongs to the globin family. As to quaternary structure, monomer. Homodimer and homotetramer; disulfide-linked. Mainly monomeric but also detected as part of homodimers and homotetramers. Interacts with 14-3-3 proteins; regulates the phosphorylation of NGB. Could interact (ferrous form) with G-alpha(i) proteins (GTP-bound form). Post-translationally, phosphorylated during hypoxia by ERK1/ERK2. Phosphorylation regulates the heme pocket hexacoordination preventing the association of His-64 with the heme metal center. Thereby, promotes the access of dioxygen and nitrite to the heme and stimulates the nitrite reductase activity. Phosphorylation during hypoxia is stabilized by 14-3-3 proteins.

It is found in the cytoplasm. It localises to the cytosol. The protein resides in the mitochondrion matrix. The catalysed reaction is Fe(III)-heme b-[protein] + nitric oxide + H2O = Fe(II)-heme b-[protein] + nitrite + 2 H(+). Its function is as follows. Monomeric globin with a bis-histidyl six-coordinate heme-iron atom through which it can bind dioxygen, carbon monoxide and nitric oxide. Could help transport oxygen and increase its availability to the metabolically active neuronal tissues, though its low quantity in tissues as well as its high affinity for dioxygen, which may limit its oxygen-releasing ability, argue against it. The ferrous/deoxygenated form exhibits a nitrite reductase activity and it could produce nitric oxide which in turn inhibits cellular respiration in response to hypoxia. In its ferrous/deoxygenated state, it may also exhibit GDI (Guanine nucleotide Dissociation Inhibitor) activity toward heterotrimeric G-alpha proteins, thereby regulating signal transduction to facilitate neuroprotective responses in the wake of hypoxia and associated oxidative stress. The polypeptide is Neuroglobin (Oryctolagus cuniculus (Rabbit)).